The following is a 587-amino-acid chain: MAATTYERLKLHVTPEKFYVEACDDGADDVLIIDRVSTEVTLSVKKDIPPSAVTRPIFGILGTIHLVAGNYLIVITKKKKIGEFFNHVIWKATDFDVLSYKKTMLHLTDIQLQDNKTFLAMMNHVLSMDGFYFSTTYDLTHTLQRLSNTSPEFQEMSLLERADQRFVWNGHLLRELSAQPEVHRFALPVLHGFITMHSCSINGKYFDWILISRRSCFRAGVRYYVRGIDSEGHAANFVETEQIVHYNGSRASFVQTRGSIPLYWSQRPNLKYKPLPLINKVANHMDGFQRHFDSQIIIYGKQVIINLVNQKGSEKPLEQAFATMVSSLGNGMIRYIAFDFHKECKNMRWDRLSILLDQVAEMQDELSYFLVDPAGVVLSTQEGVFRSNCMDCLDRTNVIQSLLARRSLQAQLQRLGVLHVGQKLEEQDEFEKIYKNAWADNANACAKQYAGTGALKTDFTRTGKRTQLGLIMDGWNSLIRYYKNNFSDGFRQDSIDLFLGNYSVDELESHSPLSVPRDLKFLALPIIMVVAFSMCIICLLMAGDTWTETLAYVLFWGVASIGTFFIILYNGKDFVDAPRLVQKEKID.

Over 1 to 520 (MAATTYERLK…SPLSVPRDLK (520 aa)) the chain is Cytoplasmic. The 330-residue stretch at 122 to 451 (MNHVLSMDGF…ANACAKQYAG (330 aa)) folds into the SAC domain. Positions 452–587 (TGALKTDFTR…PRLVQKEKID (136 aa)) are essential for phosphatidylinositol-4-phosphate phosphatase activity. Residue K456 is modified to N6-acetyllysine. A helical membrane pass occupies residues 521 to 541 (FLALPIIMVVAFSMCIICLLM). Topologically, residues 542–548 (AGDTWTE) are lumenal. Residues 549-569 (TLAYVLFWGVASIGTFFIILY) traverse the membrane as a helical segment. Residues 570 to 587 (NGKDFVDAPRLVQKEKID) are Cytoplasmic-facing.

Interacts with TMEM39A. Interacts with SEC23A and SEC24A; this interaction is reduced in the absence of TMEM39A. Interacts with PLEKHA3 and VAPA and/or VAPB to form a ternary complex.

The protein resides in the endoplasmic reticulum membrane. The protein localises to the golgi apparatus membrane. The catalysed reaction is a 1,2-diacyl-sn-glycero-3-phospho-(1D-myo-inositol-3-phosphate) + H2O = a 1,2-diacyl-sn-glycero-3-phospho-(1D-myo-inositol) + phosphate. It carries out the reaction a 1,2-diacyl-sn-glycero-3-phospho-(1D-myo-inositol 4-phosphate) + H2O = a 1,2-diacyl-sn-glycero-3-phospho-(1D-myo-inositol) + phosphate. Its function is as follows. Phosphoinositide phosphatase which catalyzes the hydrolysis of phosphatidylinositol 4-phosphate (PtdIns(4)P), phosphatidylinositol 3-phosphate (PtdIns(3)P) and has low activity towards phosphatidylinositol-3,5-bisphosphate (PtdIns(3,5)P2). Shows a very robust PtdIns(4)P phosphatase activity when it binds PtdIns(4)P in a 'cis' configuration in the cellular environment, with much less activity seen when it binds PtdIns(4)P in 'trans' configuration. PtdIns(4)P phosphatase activity (when it binds PtdIns(4)P in 'trans' configuration) is enhanced in the presence of PLEKHA3. The protein is Phosphatidylinositol-3-phosphatase SAC1 (SACM1L) of Bos taurus (Bovine).